We begin with the raw amino-acid sequence, 422 residues long: Dihydroorotase (422 aa).

Zn(2+) contacts are provided by His-59 and His-61. Substrate is bound by residues 61–63 (HFR) and Asn-93. The Zn(2+) site is built by Asp-150, His-177, and His-230. Asn-276 serves as a coordination point for substrate. Residue Asp-303 coordinates Zn(2+). Asp-303 is an active-site residue. Position 307 (His-307) interacts with substrate.

Belongs to the metallo-dependent hydrolases superfamily. DHOase family. Class I DHOase subfamily. It depends on Zn(2+) as a cofactor.

The catalysed reaction is (S)-dihydroorotate + H2O = N-carbamoyl-L-aspartate + H(+). The protein operates within pyrimidine metabolism; UMP biosynthesis via de novo pathway; (S)-dihydroorotate from bicarbonate: step 3/3. Catalyzes the reversible cyclization of carbamoyl aspartate to dihydroorotate. This is Dihydroorotase from Streptococcus pneumoniae serotype 4 (strain ATCC BAA-334 / TIGR4).